A 515-amino-acid chain; its full sequence is 1-pyrroline-5-carboxylate dehydrogenase (515 aa).

Catalysis depends on residues Glu286 and Cys320.

Belongs to the aldehyde dehydrogenase family. RocA subfamily.

It carries out the reaction L-glutamate 5-semialdehyde + NAD(+) + H2O = L-glutamate + NADH + 2 H(+). It participates in amino-acid degradation; L-proline degradation into L-glutamate; L-glutamate from L-proline: step 2/2. The polypeptide is 1-pyrroline-5-carboxylate dehydrogenase (Geobacillus sp. (strain WCH70)).